The following is a 257-amino-acid chain: Imidazole glycerol phosphate synthase subunit HisF (257 aa).

Residues Asp-12 and Asp-131 contribute to the active site.

Belongs to the HisA/HisF family. In terms of assembly, heterodimer of HisH and HisF.

Its subcellular location is the cytoplasm. The catalysed reaction is 5-[(5-phospho-1-deoxy-D-ribulos-1-ylimino)methylamino]-1-(5-phospho-beta-D-ribosyl)imidazole-4-carboxamide + L-glutamine = D-erythro-1-(imidazol-4-yl)glycerol 3-phosphate + 5-amino-1-(5-phospho-beta-D-ribosyl)imidazole-4-carboxamide + L-glutamate + H(+). It participates in amino-acid biosynthesis; L-histidine biosynthesis; L-histidine from 5-phospho-alpha-D-ribose 1-diphosphate: step 5/9. Its function is as follows. IGPS catalyzes the conversion of PRFAR and glutamine to IGP, AICAR and glutamate. The HisF subunit catalyzes the cyclization activity that produces IGP and AICAR from PRFAR using the ammonia provided by the HisH subunit. The sequence is that of Imidazole glycerol phosphate synthase subunit HisF from Burkholderia multivorans (strain ATCC 17616 / 249).